Reading from the N-terminus, the 372-residue chain is 3,5-dihydroxyphenylacetyl-CoA synthase (372 aa).

Cys-160 is a catalytic residue.

It belongs to the thiolase-like superfamily. Chalcone/stilbene synthases family.

It catalyses the reaction 4 malonyl-CoA + 4 H(+) = (3,5-dihydroxyphenyl)acetyl-CoA + 4 CO2 + 3 CoA + H2O. The protein operates within antibiotic biosynthesis. Functionally, involved in the biosynthesis of the nonproteinogenic amino acid monomer (S)-3,5-dihydroxyphenylglycine (Dpg) responsible of the production of balhimycin antibiotic. Catalyzes the Claisen condensation of four molecules of malonyl-CoA to yield 3,5-dihydroxyphenylacetyl-CoA (DPA-CoA) and three free coenzyme A (CoA). DpgA requires the presence of the dehydratases DpgB and DpgD to facilitate the aromatization of the DPA-S-DgpA or DPA-S-CoA intermediate. The protein is 3,5-dihydroxyphenylacetyl-CoA synthase of Amycolatopsis balhimycina.